The following is a 211-amino-acid chain: Lipoprotein signal peptidase (211 aa).

A run of 3 helical transmembrane segments spans residues 12–32 (LLAL…YLAV), 96–116 (AFRN…ILHY), and 127–147 (LQVA…DRLA). Residues D153 and D174 contribute to the active site. Residues 167–187 (WPTFNIADSLIVVGVALLVLH) form a helical membrane-spanning segment.

The protein belongs to the peptidase A8 family.

The protein localises to the cell inner membrane. It catalyses the reaction Release of signal peptides from bacterial membrane prolipoproteins. Hydrolyzes -Xaa-Yaa-Zaa-|-(S,diacylglyceryl)Cys-, in which Xaa is hydrophobic (preferably Leu), and Yaa (Ala or Ser) and Zaa (Gly or Ala) have small, neutral side chains.. It participates in protein modification; lipoprotein biosynthesis (signal peptide cleavage). This protein specifically catalyzes the removal of signal peptides from prolipoproteins. This chain is Lipoprotein signal peptidase, found in Anaeromyxobacter sp. (strain Fw109-5).